The chain runs to 108 residues: Iron-sulfur cluster assembly protein CyaY (108 aa).

This sequence belongs to the frataxin family.

In terms of biological role, involved in iron-sulfur (Fe-S) cluster assembly. May act as a regulator of Fe-S biogenesis. This Pseudomonas paraeruginosa (strain DSM 24068 / PA7) (Pseudomonas aeruginosa (strain PA7)) protein is Iron-sulfur cluster assembly protein CyaY.